Here is a 483-residue protein sequence, read N- to C-terminus: MTKEEVEEEPLSPMARLFQSPGIENCIITMIGFKAKINPDIILDDLKHNVSKHPRFCSKLVIATHTNYDGERWMKTKVNVEDHVFVPDIDLQEINKDGDGFVDDYVSRLTLSPLDKSKPLWDIHILNVKTSDAEAVGVMRCHHSLADGMSLMSLLVACTRKTSNLESFPTIPAIKRREQMMSHRFGNKGWYSRSINAVYYAVRLIWNTIVDLLLLWATSLFFKDTETPISEGIGSGNNARRFYHRTVSLDDIKLIKNAMKMTINDVLLGVTQDALSRYLNQRYGDKNGEGVTTTSNLNNLPGKIRIRAGVAVNLRQDIGIQPLEDMLAKDSKCRWGNYDSLVFVPFSISLETDPLVPLLKAKSIMDRKKHSLVAPMHYSIIEFIINTFGTKVFNRTCSNTTTILSNIVGPVEEVSLHGNCITYIALTGYGHSQALMIHFISYANKMIITIAVDPAVIPDPHNICDEMEKSLKAMKDTLSGKSD.

Over 1 to 203 (MTKEEVEEEP…SINAVYYAVR (203 aa)) the chain is Cytoplasmic. The active-site Proton acceptor is His-143. A helical transmembrane segment spans residues 204-222 (LIWNTIVDLLLLWATSLFF). Over 223 to 483 (KDTETPISEG…MKDTLSGKSD (261 aa)) the chain is Lumenal. N-linked (GlcNAc...) asparagine glycans are attached at residues Asn-394 and Asn-399.

This sequence in the N-terminal section; belongs to the long-chain O-acyltransferase family. As to expression, mostly expressed in roots.

The protein resides in the cell membrane. It localises to the endoplasmic reticulum membrane. It carries out the reaction an acyl-CoA + a 1,2-diacyl-sn-glycerol = a triacyl-sn-glycerol + CoA. It catalyses the reaction a long chain fatty alcohol + a fatty acyl-CoA = a wax ester + CoA. Its pathway is glycerolipid metabolism; triacylglycerol biosynthesis. It functions in the pathway lipid metabolism. Its function is as follows. Bifunctional wax ester synthase/diacylglycerol acyltransferase. Involved in cuticular wax biosynthesis. This chain is Wax ester synthase/diacylglycerol acyltransferase 10, found in Arabidopsis thaliana (Mouse-ear cress).